Consider the following 878-residue polypeptide: DNA mismatch repair protein MutS (878 aa).

ATP is bound at residue 630–637 (GPNMAGKS).

The protein belongs to the DNA mismatch repair MutS family.

Functionally, this protein is involved in the repair of mismatches in DNA. It is possible that it carries out the mismatch recognition step. This protein has a weak ATPase activity. This is DNA mismatch repair protein MutS from Chlorobaculum tepidum (strain ATCC 49652 / DSM 12025 / NBRC 103806 / TLS) (Chlorobium tepidum).